A 150-amino-acid polypeptide reads, in one-letter code: 3-hydroxyacyl-[acyl-carrier-protein] dehydratase FabZ (150 aa).

His-51 is a catalytic residue.

The protein belongs to the thioester dehydratase family. FabZ subfamily.

It is found in the cytoplasm. It catalyses the reaction a (3R)-hydroxyacyl-[ACP] = a (2E)-enoyl-[ACP] + H2O. Involved in unsaturated fatty acids biosynthesis. Catalyzes the dehydration of short chain beta-hydroxyacyl-ACPs and long chain saturated and unsaturated beta-hydroxyacyl-ACPs. This chain is 3-hydroxyacyl-[acyl-carrier-protein] dehydratase FabZ, found in Geobacter metallireducens (strain ATCC 53774 / DSM 7210 / GS-15).